The primary structure comprises 550 residues: Crystal protein (550 aa).

Positions 1 to 19 (MNKIIILLIILLSFDIISA) are cleaved as a signal peptide. A disulfide bond links Cys-91 and Cys-111. Asn-156 is a glycosylation site (N-linked (GlcNAc...) asparagine). Ser-215 serves as the catalytic Acyl-ester intermediate. A disulfide bond links Cys-267 and Cys-274. Residues Glu-340 and His-443 each act as charge relay system in the active site. N-linked (GlcNAc...) asparagine glycosylation is present at Asn-506.

The protein belongs to the type-B carboxylesterase/lipase family.

It localises to the cytoplasmic vesicle. The protein resides in the esterosome membrane. The polypeptide is Crystal protein (cryS) (Dictyostelium discoideum (Social amoeba)).